Consider the following 101-residue polypeptide: Small ribosomal subunit protein uS14A (101 aa).

Residues 31–73 (IKSPSTTPEARVAAQSELNRQPRDASPVRVRNRDSVDGRPRGH) form a disordered region. A compositionally biased stretch (basic and acidic residues) spans 61–70 (RNRDSVDGRP).

This sequence belongs to the universal ribosomal protein uS14 family. As to quaternary structure, part of the 30S ribosomal subunit. Contacts proteins S3 and S10.

In terms of biological role, binds 16S rRNA, required for the assembly of 30S particles and may also be responsible for determining the conformation of the 16S rRNA at the A site. The chain is Small ribosomal subunit protein uS14A from Mycolicibacterium vanbaalenii (strain DSM 7251 / JCM 13017 / BCRC 16820 / KCTC 9966 / NRRL B-24157 / PYR-1) (Mycobacterium vanbaalenii).